We begin with the raw amino-acid sequence, 264 residues long: Apolipoprotein A-I (264 aa).

The signal sequence occupies residues 1-18; sequence MKAVVLAVAVLFLTGSQA. A run of 2 repeats spans residues 67–88 and 89–110. A 10 X approximate tandem repeats region spans residues 67 to 264; sequence LKLLDNWDTL…DQATKQLTAQ (198 aa). A Methionine sulfoxide modification is found at Met-109. Residues 111–121 form a 3; half-length repeat; it reads KDLQEVKQKVQ. Tandem repeats lie at residues 122-143, 144-165, 166-187, 188-207, and 208-229. A 9; half-length repeat occupies 230-240; it reads PALEDLRQGLL. Repeat 10 spans residues 241–264; sequence PVLESLKASILSSIDQATKQLTAQ.

This sequence belongs to the apolipoprotein A1/A4/E family. As to quaternary structure, homodimer. Interacts with APOA1BP and CLU. Component of a sperm activating protein complex (SPAP), consisting of APOA1, an immunoglobulin heavy chain, an immunoglobulin light chain and albumin. Interacts with NDRG1. Interacts with SCGB3A2. Interacts with NAXE and YJEFN3. Glycosylated. Post-translationally, palmitoylated. In terms of processing, phosphorylation sites are present in the extracellular medium.

It localises to the secreted. Its function is as follows. Participates in the reverse transport of cholesterol from tissues to the liver for excretion by promoting cholesterol efflux from tissues and by acting as a cofactor for the lecithin cholesterol acyltransferase (LCAT). As part of the SPAP complex, activates spermatozoa motility. The chain is Apolipoprotein A-I (APOA1) from Chinchilla lanigera (Long-tailed chinchilla).